Here is a 288-residue protein sequence, read N- to C-terminus: Polyamine aminopropyltransferase (288 aa).

Residues 9-238 (ETLHDQFGQY…GIMTFAWATD (230 aa)) form the PABS domain. Q33 lines the S-methyl-5'-thioadenosine pocket. H64 and D88 together coordinate spermidine. Residues E108 and 140–141 (DG) each bind S-methyl-5'-thioadenosine. D158 functions as the Proton acceptor in the catalytic mechanism. 158-161 (DCTD) is a spermidine binding site. P165 lines the S-methyl-5'-thioadenosine pocket.

This sequence belongs to the spermidine/spermine synthase family. Homodimer or homotetramer.

Its subcellular location is the cytoplasm. The enzyme catalyses S-adenosyl 3-(methylsulfanyl)propylamine + putrescine = S-methyl-5'-thioadenosine + spermidine + H(+). Its pathway is amine and polyamine biosynthesis; spermidine biosynthesis; spermidine from putrescine: step 1/1. Functionally, catalyzes the irreversible transfer of a propylamine group from the amino donor S-adenosylmethioninamine (decarboxy-AdoMet) to putrescine (1,4-diaminobutane) to yield spermidine. The protein is Polyamine aminopropyltransferase of Shigella boydii serotype 18 (strain CDC 3083-94 / BS512).